The primary structure comprises 378 residues: 1-acyl-sn-glycerol-3-phosphate acyltransferase delta (378 aa).

A helical transmembrane segment spans residues 11 to 31 (FLCHLVFCYVFIASGLIVNAI). The HXXXXD motif signature appears at 96 to 101 (HKFEID). 3 helical membrane passes run 125 to 145 (ELAY…IFCT), 311 to 331 (WLFW…SMVS), and 338 to 358 (LASL…MIGV).

The protein belongs to the 1-acyl-sn-glycerol-3-phosphate acyltransferase family.

The protein localises to the endoplasmic reticulum membrane. It carries out the reaction a 1-acyl-sn-glycero-3-phosphate + an acyl-CoA = a 1,2-diacyl-sn-glycero-3-phosphate + CoA. The catalysed reaction is (4Z,7Z,10Z,13Z,16Z,19Z)-docosahexaenoyl-CoA + 1-hexadecanoyl-sn-glycero-3-phosphate = 1-hexadecanoyl-2-(4Z,7Z,10Z,13Z,16Z,19Z-docosahexaenoyl)-sn-glycero-3-phosphate + CoA. It catalyses the reaction 1-octadecanoyl-sn-glycero-3-phosphate + (9Z,12Z)-octadecadienoyl-CoA = 1-octadecanoyl-2-(9Z,12Z-octadecadienoyl)-sn-glycero-3-phosphate + CoA. The enzyme catalyses 1-octadecanoyl-sn-glycero-3-phosphate + (4Z,7Z,10Z,13Z,16Z,19Z)-docosahexaenoyl-CoA = 1-octadecanoyl-2-(4Z,7Z,10Z,13Z,16Z,19Z-docosahexaenoyl)-sn-glycero-3-phosphate + CoA. It carries out the reaction (4Z,7Z,10Z,13Z,16Z,19Z)-docosahexaenoyl-CoA + 1-(9Z-octadecenoyl)-sn-glycero-3-phosphate = 1-(9Z-octadecenoyl)-2-(4Z,7Z,10Z,13Z,16Z,19Z-docosahexaenoyl)-sn-glycero-3-phosphate + CoA. It functions in the pathway phospholipid metabolism; CDP-diacylglycerol biosynthesis; CDP-diacylglycerol from sn-glycerol 3-phosphate: step 2/3. Functionally, converts 1-acyl-sn-glycerol-3-phosphate (lysophosphatidic acid or LPA) into 1,2-diacyl-sn-glycerol-3-phosphate (phosphatidic acid or PA) by incorporating an acyl moiety at the sn-2 position of the glycerol backbone. Exhibits high acyl-CoA specificity for polyunsaturated fatty acyl-CoA, especially docosahexaenoyl-CoA (22:6-CoA, DHA-CoA). This chain is 1-acyl-sn-glycerol-3-phosphate acyltransferase delta (Agpat4), found in Rattus norvegicus (Rat).